The primary structure comprises 905 residues: DNA gyrase subunit A (905 aa).

The Topo IIA-type catalytic domain occupies 35 to 524 (IPDVRDGLKP…GEFDQDIEDL (490 aa)). Tyrosine 123 serves as the catalytic O-(5'-phospho-DNA)-tyrosine intermediate. Residues 551–557 (QKRGGKG) carry the GyrA-box motif.

Belongs to the type II topoisomerase GyrA/ParC subunit family. As to quaternary structure, heterotetramer, composed of two GyrA and two GyrB chains. In the heterotetramer, GyrA contains the active site tyrosine that forms a transient covalent intermediate with DNA, while GyrB binds cofactors and catalyzes ATP hydrolysis.

Its subcellular location is the cytoplasm. The enzyme catalyses ATP-dependent breakage, passage and rejoining of double-stranded DNA.. In terms of biological role, a type II topoisomerase that negatively supercoils closed circular double-stranded (ds) DNA in an ATP-dependent manner to modulate DNA topology and maintain chromosomes in an underwound state. Negative supercoiling favors strand separation, and DNA replication, transcription, recombination and repair, all of which involve strand separation. Also able to catalyze the interconversion of other topological isomers of dsDNA rings, including catenanes and knotted rings. Type II topoisomerases break and join 2 DNA strands simultaneously in an ATP-dependent manner. In Rickettsia typhi (strain ATCC VR-144 / Wilmington), this protein is DNA gyrase subunit A.